Consider the following 99-residue polypeptide: uncharacterized protein (99 aa).

Residues S50–Q77 are disordered.

This is an uncharacterized protein from Homo sapiens (Human).